The chain runs to 218 residues: Adenylate kinase (218 aa).

Residue glycine 12–threonine 17 coordinates ATP. The interval serine 32–valine 61 is NMP. AMP contacts are provided by residues threonine 33, arginine 38, glutamine 59 to valine 61, glycine 87 to arginine 90, and glutamine 94. Residues glycine 128–aspartate 165 form an LID region. Arginine 129 is an ATP binding site. Residues cysteine 132 and cysteine 135 each contribute to the Zn(2+) site. Residue serine 138 to tyrosine 139 coordinates ATP. Cysteine 152 and cysteine 155 together coordinate Zn(2+). Residues arginine 162 and arginine 173 each contribute to the AMP site. An ATP-binding site is contributed by glutamine 201.

It belongs to the adenylate kinase family. In terms of assembly, monomer.

Its subcellular location is the cytoplasm. The enzyme catalyses AMP + ATP = 2 ADP. The protein operates within purine metabolism; AMP biosynthesis via salvage pathway; AMP from ADP: step 1/1. Functionally, catalyzes the reversible transfer of the terminal phosphate group between ATP and AMP. Plays an important role in cellular energy homeostasis and in adenine nucleotide metabolism. This chain is Adenylate kinase, found in Clostridium perfringens (strain 13 / Type A).